Here is a 68-residue protein sequence, read N- to C-terminus: Negative regulator of P-body association (68 aa).

Positions 1–68 (MGDQPCASGR…LKSHPPPPEK (68 aa)) are disordered.

As to quaternary structure, interacts with mRNA decapping proteins DCP1A, DCP2 and EDC4.

It is found in the cytoplasm. It localises to the P-body. Its function is as follows. Promotes dispersal of P-body components and is likely to play a role in the mRNA decapping process. This is Negative regulator of P-body association from Homo sapiens (Human).